Consider the following 482-residue polypeptide: tRNA sulfurtransferase (482 aa).

A THUMP domain is found at 61-165 (AEVLEILTHT…GDKLNQVLAR (105 aa)). ATP-binding positions include 183-184 (LI), Lys265, Gly287, and Gln296. The cysteines at positions 344 and 456 are disulfide-linked. In terms of domain architecture, Rhodanese spans 404-482 (VEEHAVVLDI…GFNNVKVYRP (79 aa)). Residue Cys456 is the Cysteine persulfide intermediate of the active site.

This sequence belongs to the ThiI family.

It is found in the cytoplasm. It carries out the reaction [ThiI sulfur-carrier protein]-S-sulfanyl-L-cysteine + a uridine in tRNA + 2 reduced [2Fe-2S]-[ferredoxin] + ATP + H(+) = [ThiI sulfur-carrier protein]-L-cysteine + a 4-thiouridine in tRNA + 2 oxidized [2Fe-2S]-[ferredoxin] + AMP + diphosphate. The enzyme catalyses [ThiS sulfur-carrier protein]-C-terminal Gly-Gly-AMP + S-sulfanyl-L-cysteinyl-[cysteine desulfurase] + AH2 = [ThiS sulfur-carrier protein]-C-terminal-Gly-aminoethanethioate + L-cysteinyl-[cysteine desulfurase] + A + AMP + 2 H(+). It functions in the pathway cofactor biosynthesis; thiamine diphosphate biosynthesis. Catalyzes the ATP-dependent transfer of a sulfur to tRNA to produce 4-thiouridine in position 8 of tRNAs, which functions as a near-UV photosensor. Also catalyzes the transfer of sulfur to the sulfur carrier protein ThiS, forming ThiS-thiocarboxylate. This is a step in the synthesis of thiazole, in the thiamine biosynthesis pathway. The sulfur is donated as persulfide by IscS. This chain is tRNA sulfurtransferase, found in Vibrio parahaemolyticus serotype O3:K6 (strain RIMD 2210633).